The chain runs to 150 residues: Ribosome maturation factor RimP (150 aa).

The protein belongs to the RimP family.

Its subcellular location is the cytoplasm. Its function is as follows. Required for maturation of 30S ribosomal subunits. The chain is Ribosome maturation factor RimP from Hahella chejuensis (strain KCTC 2396).